A 90-amino-acid chain; its full sequence is Large ribosomal subunit protein bL27 (90 aa).

The segment at 1 to 20 is disordered; the sequence is MAHKKAGGSSRNGRDSAGKR.

Belongs to the bacterial ribosomal protein bL27 family.

The sequence is that of Large ribosomal subunit protein bL27 from Rhodopseudomonas palustris (strain BisB18).